Reading from the N-terminus, the 72-residue chain is Translation initiation factor IF-1 (72 aa).

One can recognise an S1-like domain in the interval 1–72 (MAKEDVIEMQ…SKGRIVFRAR (72 aa)).

It belongs to the IF-1 family. In terms of assembly, component of the 30S ribosomal translation pre-initiation complex which assembles on the 30S ribosome in the order IF-2 and IF-3, IF-1 and N-formylmethionyl-tRNA(fMet); mRNA recruitment can occur at any time during PIC assembly.

It is found in the cytoplasm. One of the essential components for the initiation of protein synthesis. Stabilizes the binding of IF-2 and IF-3 on the 30S subunit to which N-formylmethionyl-tRNA(fMet) subsequently binds. Helps modulate mRNA selection, yielding the 30S pre-initiation complex (PIC). Upon addition of the 50S ribosomal subunit IF-1, IF-2 and IF-3 are released leaving the mature 70S translation initiation complex. This is Translation initiation factor IF-1 from Photobacterium profundum (strain SS9).